A 582-amino-acid chain; its full sequence is 2-succinyl-5-enolpyruvyl-6-hydroxy-3-cyclohexene-1-carboxylate synthase (582 aa).

It belongs to the TPP enzyme family. MenD subfamily. In terms of assembly, homodimer. Mg(2+) is required as a cofactor. Requires Mn(2+) as cofactor. The cofactor is thiamine diphosphate.

It catalyses the reaction isochorismate + 2-oxoglutarate + H(+) = 5-enolpyruvoyl-6-hydroxy-2-succinyl-cyclohex-3-ene-1-carboxylate + CO2. It functions in the pathway quinol/quinone metabolism; 1,4-dihydroxy-2-naphthoate biosynthesis; 1,4-dihydroxy-2-naphthoate from chorismate: step 2/7. Its pathway is quinol/quinone metabolism; menaquinone biosynthesis. Catalyzes the thiamine diphosphate-dependent decarboxylation of 2-oxoglutarate and the subsequent addition of the resulting succinic semialdehyde-thiamine pyrophosphate anion to isochorismate to yield 2-succinyl-5-enolpyruvyl-6-hydroxy-3-cyclohexene-1-carboxylate (SEPHCHC). The protein is 2-succinyl-5-enolpyruvyl-6-hydroxy-3-cyclohexene-1-carboxylate synthase of Chlorobaculum tepidum (strain ATCC 49652 / DSM 12025 / NBRC 103806 / TLS) (Chlorobium tepidum).